Consider the following 740-residue polypeptide: Gramillins biosynthetic cluster protein FGSG_11657 (740 aa).

Disordered regions lie at residues 353–391 (QADSPVPLSSVKEESGLGKLARSPAEPAPSRPLPGSSIP), 414–434 (SKLSDEAEADTSIKPDSDAAS), 514–535 (PKEQEEPKRHRTSNNSIVGSSD), and 656–686 (EHEGEGRADTNRHVSTQSNMPTEQSLLPQGD). Over residues 656–667 (EHEGEGRADTNR) the composition is skewed to basic and acidic residues. The span at 668-682 (HVSTQSNMPTEQSLL) shows a compositional bias: polar residues.

The protein operates within mycotoxin biosynthesis. Part of the gene cluster that mediates the biosynthesis of gramillins A and B, bicyclic lipopeptides that induce cell death in maize leaves but not in wheat leaves. The nonribosomal peptide synthetase GRA1 incorporates respectively a glutamic adic (Glu), a leucine (Leu), a serine (Ser), a hydroxyglutamine (HOGln), a 2-amino decanoic acid, and 2 cysteins (CysB and CysA). The biosynthesis of 2-amino decanoic acid incorporated in gramillins could be initiated by a fatty acid synthase composed of the alpha and beta subunits FGSG_00036 and FGSG_11656. The cytochrome P450 monooxygenase FGSG_15680 could hydroxylate the fatty acid chain. Subsequent oxidation to the ketone by the oxidoreductase FGSG_00048 and transamination by aminotransferase FGSG_00049 could form 2-amino-decanoic acid. On the other hand, FGSG_15680 could also be responsible for the HO-modified glutamine at the gamma-position. Whether hydroxylation occurs on the fully assembled product or on the Gln residue prior to assembly into the gramillins requires further proof. The thioredoxin FGSG_00043 could also be required for the disulfide-bond formation between CysA and CysB. The specific involvement of the remaining proteins from the cluster is more difficult to discern, but could have broader regulatory (FGSG_00040 and FGSG_11657) or enzymatic functions (FGSG_00044 and FGSG_00045). The final C-domain of GRA1 does not possess the expected sequence of a termination CT domain, often implicated in macrocyclization and release of a cyclopeptidein fungal NRPs; and the thioesterase FGSG_00047 may act in concert with the terminal C-domain of GRA1 to catalyze the formation of the macrocyclic anhydride and release of the products. The sequence is that of Gramillins biosynthetic cluster protein FGSG_11657 from Gibberella zeae (strain ATCC MYA-4620 / CBS 123657 / FGSC 9075 / NRRL 31084 / PH-1) (Wheat head blight fungus).